A 70-amino-acid chain; its full sequence is Alpha-conotoxin EIIB (70 aa).

The first 21 residues, 1–21 (MGMRMMFIVFLLVVLATTVVS), serve as a signal peptide directing secretion. The propeptide occupies 22–51 (FTLDHVLGLASEGRNAKAIDNALDQRDPKR). Q52 is modified (pyrrolidone carboxylic acid). P54 carries the hydroxyproline modification. 2 disulfides stabilise this stretch: C56–C62 and C57–C67. Cysteine amide is present on C67.

Expressed by the venom duct.

The protein resides in the secreted. In terms of biological role, alpha-conotoxins bind to the nicotinic acetylcholine receptors (nAChR) and inhibit them. This peptide potently blocks muscular nicotinic acetylcholine receptor (CHRNA1-CHRNB1-CHRNG-CHRND), and has no effect on neuronal receptors. It is able to totally displace [125I]-Bgtx from the Torpedo receptor with an inhibition constant (Ki) of 2.2 and 0.7 nM. This chain is Alpha-conotoxin EIIB, found in Conus ermineus (Agate cone).